A 440-amino-acid polypeptide reads, in one-letter code: UDP-glucose 6-dehydrogenase YwqF (440 aa).

NAD(+) contacts are provided by residues 2-19, valine 11, aspartate 30, lysine 35, threonine 121, and glutamate 155; that span reads NITVIGTGYVGLVTGVSL. Residues 151–155, lysine 204, asparagine 208, 249–253, and glycine 257 each bind substrate; these read EFLRE and FLKAG. The Nucleophile role is filled by cysteine 260. Lysine 263 serves as a coordination point for NAD(+). Lysine 320 is a binding site for substrate. Residue arginine 327 participates in NAD(+) binding.

It belongs to the UDP-glucose/GDP-mannose dehydrogenase family. Post-translationally, phosphorylated on tyrosine residue(s). Phosphorylated by YwqD and dephosphorylated by YwqE in vitro.

It is found in the cytoplasm. The enzyme catalyses UDP-alpha-D-glucose + 2 NAD(+) + H2O = UDP-alpha-D-glucuronate + 2 NADH + 3 H(+). Its pathway is nucleotide-sugar biosynthesis; UDP-alpha-D-glucuronate biosynthesis; UDP-alpha-D-glucuronate from UDP-alpha-D-glucose: step 1/1. Competitively inhibited by UDP-glucose. Activated by phosphorylation, which may increase affinity for NAD(+); inhibited by dephosphorylation. In terms of biological role, catalyzes the conversion of UDP-glucose into UDP-glucuronate, one of the precursors of teichuronic acid. The chain is UDP-glucose 6-dehydrogenase YwqF (ywqF) from Bacillus subtilis (strain 168).